Consider the following 202-residue polypeptide: Small ribosomal subunit protein uS4c (202 aa).

One can recognise an S4 RNA-binding domain in the interval 90–153; the sequence is MRLDNIIFRL…KSQAIISKNI (64 aa).

Belongs to the universal ribosomal protein uS4 family. Part of the 30S ribosomal subunit. Contacts protein S5. The interaction surface between S4 and S5 is involved in control of translational fidelity.

Its subcellular location is the plastid. The protein localises to the chloroplast. Its function is as follows. One of the primary rRNA binding proteins, it binds directly to 16S rRNA where it nucleates assembly of the body of the 30S subunit. Functionally, with S5 and S12 plays an important role in translational accuracy. In Splachnum sphaericum (Pinkstink dung moss), this protein is Small ribosomal subunit protein uS4c (rps4).